The chain runs to 136 residues: Large ribosomal subunit protein uL16 (136 aa).

The protein belongs to the universal ribosomal protein uL16 family. Part of the 50S ribosomal subunit.

Its function is as follows. Binds 23S rRNA and is also seen to make contacts with the A and possibly P site tRNAs. This chain is Large ribosomal subunit protein uL16, found in Pelagibacter ubique (strain HTCC1062).